The chain runs to 601 residues: Glutathione-regulated potassium-efflux system protein KefB (601 aa).

13 helical membrane passes run 4 to 24 (SDFLLAGVLFLFAAVAAVPLA), 29 to 49 (IGAVLGYLLAGIAIGPWGLGF), 55 to 75 (EILHFSELGVVFLMFIIGLEL), 87 to 107 (IFGVGAAQVLLSAALLAGLLM), 115 to 135 (AAVVGGIGLAMSSTAMALQLM), 152 to 172 (VLLFQDLAVIPALALVPLLAG), 177 to 197 (HFDWMKIGMKVLAFVGMLIGG), 207 to 227 (FIAASGVREVFTAATLLLVLG), 230 to 250 (LFMDALGLSMALGTFIAGVLL), 268 to 288 (GLLLGLFFISVGMSLNLGVLY), 291 to 311 (LLWVVIAVVVLVAVKILVLYL), 324 to 344 (MQFAGVLSQGGEFAFVLFSTA), and 356 to 376 (ALLLVTVTLSMMTTPLLMKLV). One can recognise an RCK N-terminal domain in the interval 400-519 (KPQVIVVGFG…AGVTQFSRET (120 aa)).

It belongs to the monovalent cation:proton antiporter 2 (CPA2) transporter (TC 2.A.37) family. KefB subfamily. Interacts with the regulatory subunit KefG.

The protein resides in the cell inner membrane. Functionally, pore-forming subunit of a potassium efflux system that confers protection against electrophiles. Catalyzes K(+)/H(+) antiport. The chain is Glutathione-regulated potassium-efflux system protein KefB from Escherichia coli O17:K52:H18 (strain UMN026 / ExPEC).